Consider the following 663-residue polypeptide: Cyclic nucleotide-gated channel alpha-2 (663 aa).

A disordered region spans residues Met-1–Gln-61. Residues Met-1–Leu-144 are Cytoplasmic-facing. Low complexity predominate over residues Pro-12–Ala-23. A helical transmembrane segment spans residues Phe-145 to Asp-166. Topologically, residues Leu-167–Leu-176 are extracellular. Residues Val-177–Gly-197 form a helical membrane-spanning segment. Residues Phe-198–Lys-222 are Cytoplasmic-facing. The chain crosses the membrane as a helical span at residues Leu-223 to His-241. Residues Asn-242–Arg-246 are Extracellular-facing. Residues Phe-247 to Thr-265 traverse the membrane as a helical segment. Topologically, residues Arg-266–Ile-272 are cytoplasmic. The segment at Pro-270–Met-378 is ion conduction pathway. Residues Phe-273–Ile-296 traverse the membrane as a helical segment. Residues Ser-297–Tyr-319 lie on the Extracellular side of the membrane. 2 helical membrane-spanning segments follow: residues Leu-320–Ile-354 and Phe-355–Asn-379. A selectivity filter region spans residues Thr-337 to Glu-340. Positions Ala-380 to Gln-456 are C-linker. Over Ala-380 to Pro-663 the chain is Cytoplasmic. Positions Ala-460–Lys-580 are cyclic nucleotide-binding domain. Residues Gly-520, Ser-523, Arg-536, and Thr-537 each coordinate 3',5'-cyclic GMP. 3',5'-cyclic AMP-binding residues include Arg-536 and Thr-537. The stretch at Val-597–Asp-651 forms a coiled coil. A disordered region spans residues Met-640–Pro-663.

Belongs to the cyclic nucleotide-gated cation channel (TC 1.A.1.5) family. CNGA2 subfamily. As to quaternary structure, the olfactory cyclic nucleotide-gated channel is an heterotetramer composed of CNGA2, CNGA4 and CNGB1b subunits with 2:1:1 stoichiometry. Olfactory neurons.

The protein localises to the cell projection. Its subcellular location is the cilium membrane. It carries out the reaction Ca(2+)(in) = Ca(2+)(out). The enzyme catalyses Na(+)(in) = Na(+)(out). It catalyses the reaction K(+)(in) = K(+)(out). The catalysed reaction is NH4(+)(in) = NH4(+)(out). It carries out the reaction Rb(+)(in) = Rb(+)(out). The enzyme catalyses Li(+)(in) = Li(+)(out). It catalyses the reaction Cs(+)(in) = Cs(+)(out). Pore-forming subunit of the olfactory cyclic nucleotide-gated channel. Operates in the cilia of olfactory sensory neurons where chemical stimulation of the odorant is converted to an electrical signal. Mediates odorant-induced cAMP-dependent Ca(2+) influx triggering neuron depolarization. The rise of intracellular Ca(2+) levels potentiates the olfactory response by activating Ca(2+)-dependent Cl(-) channels, but it also serves as a negative feedback signal to desensitize the channel for rapid adaptation to odorants. Conducts cAMP- and cGMP-gated ion currents, with permeability for monovalent and divalent cations. In Bos taurus (Bovine), this protein is Cyclic nucleotide-gated channel alpha-2.